The primary structure comprises 165 residues: MSEYRRYYIKGGTWFFTVNLRNRRSQLLTTQYQMLRHAIIKVKRDRPFEINAWVVLPEHMHCIWTLPEGDDDFSSRWREIKKQFTHACGLKNIWQPRFWEHAIRNTKDYRHHVDYIYINPVKHGWVKQVSDWPFSTFHRDVARGLYPIDWAGDVTDFSAGERIIS.

This sequence belongs to the transposase 17 family. RAYT subfamily. Monomer.

With respect to regulation, cleavage occurs in the presence of magnesium, but is much more pronounced with manganese. In terms of biological role, transposase that is always flanked by repeated extragenic palindrome (REP) sequences, which are clustered in structures called bacterial interspersed mosaic elements (BIMEs). RayT catalyzes cleavage and recombination of BIMEs. Binds REP sequences and cleaves BIMEs both upstream and downstream of the REP sequence. Could be important in the creation of BIME variability and amplification. The polypeptide is REP-associated tyrosine transposase (Escherichia coli (strain K12)).